A 56-amino-acid chain; its full sequence is U-limacoditoxin(3)-Dv21 (56 aa).

The N-terminal stretch at 1–19 is a signal peptide; that stretch reads MKKVIMLLLIFALFAYALS. Disulfide bonds link Cys26–Cys41, Cys33–Cys46, and Cys40–Cys53.

The protein belongs to the limacoditoxin-22 family. Expressed by the venom secretory cell of the spine. The spine is a cuticular structure containing a single large nucleated venom-secreting cell at its base. It is an independent unit capable of producing, storing and injecting venom. On the back of D.vulnerans caterpillars, spines are grouped together by 50 to 100 to form scoli, of which there are eight in D.vulnerans.

The protein localises to the secreted. Functionally, probable toxin. Shows a moderate antiparasitic activity against the major pathogenic nematode of ruminants (H.contortus, IC(50)=22.1 uM). Does not show insecticidal activities. Does not induce increase in intracellular calcium in mouse DRG neurons, suggesting that it does not induce pain. This chain is U-limacoditoxin(3)-Dv21, found in Doratifera vulnerans (Mottled cup moth).